The sequence spans 175 residues: NAD(P)H-quinone oxidoreductase subunit J (175 aa).

Belongs to the complex I 30 kDa subunit family. As to quaternary structure, NDH-1 can be composed of about 15 different subunits; different subcomplexes with different compositions have been identified which probably have different functions.

It localises to the cellular thylakoid membrane. The enzyme catalyses a plastoquinone + NADH + (n+1) H(+)(in) = a plastoquinol + NAD(+) + n H(+)(out). The catalysed reaction is a plastoquinone + NADPH + (n+1) H(+)(in) = a plastoquinol + NADP(+) + n H(+)(out). Functionally, NDH-1 shuttles electrons from an unknown electron donor, via FMN and iron-sulfur (Fe-S) centers, to quinones in the respiratory and/or the photosynthetic chain. The immediate electron acceptor for the enzyme in this species is believed to be plastoquinone. Couples the redox reaction to proton translocation, and thus conserves the redox energy in a proton gradient. Cyanobacterial NDH-1 also plays a role in inorganic carbon-concentration. The chain is NAD(P)H-quinone oxidoreductase subunit J from Trichormus variabilis (strain ATCC 29413 / PCC 7937) (Anabaena variabilis).